A 343-amino-acid chain; its full sequence is Signaling lymphocytic activation molecule (343 aa).

Positions 1-24 are cleaved as a signal peptide; sequence MDPKGSLSWRILLFLSLAFELSYG. Residues 25–242 lie on the Extracellular side of the membrane; the sequence is TGGGVMDCPV…KQESSSESSP (218 aa). In terms of domain architecture, Ig-like V-type spans 29–138; sequence VMDCPVILQK…VQQFCKQLKL (110 aa). N-linked (GlcNAc...) asparagine glycans are attached at residues asparagine 54, asparagine 58, asparagine 103, asparagine 126, asparagine 151, asparagine 158, asparagine 192, asparagine 211, and asparagine 226. Positions 145–228 constitute an Ig-like C2-type domain; that stretch reads PEIKVLNKTQ…SSISRTFNLS (84 aa). Disulfide bonds link cysteine 161-cysteine 232 and cysteine 167-cysteine 212. Residues 243–265 traverse the membrane as a helical segment; sequence WMQYTLVPLGVVIIFILVFTAII. Over 266-343 the chain is Cytoplasmic; that stretch reads MMKRQGKSNH…VYASVTLPES (78 aa). The ITSM 1 motif lies at 286–291; sequence TIYAQV. 3 positions are modified to phosphotyrosine; by FYN: tyrosine 288, tyrosine 315, and tyrosine 335. Positions 313 to 318 match the SH2-binding motif; sequence TIYVAA. Residues 320–343 form a disordered region; sequence EPAPESVQEPNPTTVYASVTLPES. The segment covering 327 to 343 has biased composition (polar residues); sequence QEPNPTTVYASVTLPES. The ITSM 2 signature appears at 333–338; sequence TVYASV.

As to quaternary structure, interacts (via cytoplasmic domain) with SH2D1A and SH2D1B; SH2D1A mediates association with FYN; SH2D1A binds to phosphorylated and not phosphorylated ITSM 1. Interacts (via cytoplasmic domain phosphorylated on tyrosine residues) with INPP5D and PTPN11; presence of SH2D1A facilitates binding to INPP5D. Interacts with MAP4K1. Interacts with PIK3C3, BECN1 and UVRAG; indicative for an association with PI3K complex II (PI3KC3-C2). Phosphorylated on tyrosine residues by FYN.

Its subcellular location is the cell membrane. Its function is as follows. Self-ligand receptor of the signaling lymphocytic activation molecule (SLAM) family. SLAM receptors triggered by homo- or heterotypic cell-cell interactions are modulating the activation and differentiation of a wide variety of immune cells and thus are involved in the regulation and interconnection of both innate and adaptive immune response. Activities are controlled by presence or absence of small cytoplasmic adapter proteins, SH2D1A/SAP and/or SH2D1B/EAT-2. SLAMF1-induced signal-transduction events in T-lymphocytes are different from those in B-cells. Two modes of SLAMF1 signaling seem to exist: one depending on SH2D1A (and perhaps SH2D1B) and another in which protein-tyrosine phosphatase 2C (PTPN11)-dependent signal transduction operates. Initially it has been proposed that association with SH2D1A prevents binding to inhibitory effectors including INPP5D/SHIP1 and PTPN11/SHP-2. However, signaling is also regulated by SH2D1A which can simultaneously interact with and recruit FYN which subsequently phosphorylates and activates SLAMF1. Mediates IL-2-independent proliferation of activated T-cells during immune responses and induces IFN-gamma production. Downstreaming signaling involves INPP5D, DOK1 and DOK2 leading to inhibited IFN-gamma production in T-cells, and PRKCQ, BCL10 and NFKB1 leading to increased T-cell activation and Th2 cytokine production. Promotes T-cell receptor-induced IL-4 secretion by CD4(+) cells. Inhibits antigen receptor-mediated production of IFN-gamma, but not IL-2, in CD4(-)/CD8(-) T-cells. Required for IL-4 production by germinal centers T follicular helper (T(Fh))cells. May inhibit CD40-induced signal transduction in monocyte-derived dendritic cells. May play a role in allergic responses and may regulate allergen-induced Th2 cytokine and Th1 cytokine secretion. In conjunction with SLAMF6 controls the transition between positive selection and the subsequent expansion and differentiation of the thymocytic natural killer T (NKT) cell lineage. Involved in the peripheral differentiation of indifferent natural killer T (iNKT) cells toward a regulatory NKT2 type. In macrophages involved in down-regulation of IL-12, TNF-alpha and nitric oxide in response to lipopolysaccharide (LPS). In B-cells activates the ERK signaling pathway independently of SH2D1A but implicating both, SYK and INPP5D, and activates Akt signaling dependent on SYK and SH2D1A. In conjunction with CD84/SLAMF5 and SLAMF6 may be a negative regulator of the humoral immune response. Functionally, (Microbial infection) Involved in innate immune response against Gram-negative bacteria in macrophages; probably recognizes OmpC and/or OmpF on the bacterial surface, regulates phagosome maturation and recruitment of the PI3K complex II (PI3KC3-C2) leading to accumulated of PdtIns(3)P and NOX2 activity in the phagosomes. The protein is Signaling lymphocytic activation molecule (Slamf1) of Mus musculus (Mouse).